Consider the following 210-residue polypeptide: Mitochondrial cardiolipin hydrolase (210 aa).

The Mitochondrial intermembrane portion of the chain corresponds to 1–5 (MLLWG). The chain crosses the membrane as a helical span at residues 6-24 (RWKLAAGLAGLALSLELFY). The Cytoplasmic portion of the chain corresponds to 25–210 (RYMRRRKPLR…YNFFPEKENK (186 aa)). One can recognise a PLD phosphodiesterase domain in the interval 138-165 (SSGYMHHKFAVVDGTVVLTGSLNWTVQA). Catalysis depends on residues His143, Lys145, and Asp150.

This sequence belongs to the phospholipase D family. MitoPLD/Zucchini subfamily. In terms of assembly, homodimer.

The protein localises to the mitochondrion outer membrane. It catalyses the reaction a cardiolipin + H2O = a 1,2-diacyl-sn-glycero-3-phospho-(1'-sn-glycerol) + a 1,2-diacyl-sn-glycero-3-phosphate + H(+). Functionally, presents phospholipase and nuclease activities, depending on the different physiological conditions. Plays a key role in mitochondrial fusion and fission via its phospholipase activity. In its phospholipase role, it uses the mitochondrial lipid cardiolipin as substrate to generate phosphatidate (PA or 1,2-diacyl-sn-glycero-3-phosphate), a second messenger signaling lipid. Production of PA facilitates Mitofusin-mediated fusion, whereas the cleavage of PA by the Lipin family of phosphatases produces diacylgycerol (DAG) which promotes mitochondrial fission. Regulates mitochondrial shape through facilitating mitochondrial fusion. During spermatogenesis, plays a critical role in PIWI-interacting RNA (piRNA) biogenesis. piRNAs provide essential protection against the activity of mobile genetic elements. piRNA-mediated transposon silencing is thus critical for maintaining genome stability, in particular in germline cells when transposons are mobilized as a consequence of wide-spread genomic demethylation. Has been shown to be a backbone-non-specific, single strand-specific nuclease, cleaving either RNA or DNA substrates with similar affinity. Produces 5' phosphate and 3' hydroxyl termini, suggesting it could directly participate in the processing of primary piRNA transcripts. Has been proposed to act as a cardiolipin hydrolase to generate phosphatidic acid at mitochondrial surface. Although it cannot be excluded that it can act as a phospholipase in some circumstances, this activity could not be confirmed. This Xenopus laevis (African clawed frog) protein is Mitochondrial cardiolipin hydrolase (pld6).